The following is a 210-amino-acid chain: GTP pyrophosphokinase YwaC (210 aa).

Belongs to the RelA/SpoT family. As to quaternary structure, homotetramer.

The enzyme catalyses GTP + ATP = guanosine 3'-diphosphate 5'-triphosphate + AMP. Its pathway is purine metabolism; ppGpp biosynthesis; ppGpp from GTP: step 1/2. Functions as a (p)ppGpp synthase; GDP can be used instead of GTP, resulting in an increase of (p)ppGpp synthesis. Overexpression in relA mutants (triple relA-yjbM-ywaC deletions and single relA deletions) leads to growth arrest; GTP levels fall drastically, various guanine-related nucleotides are synthesized (ppGp or pGpp), the cellular transcriptional profile changes dramatically and 70S ribosome dimerization occurs. Overexpression in the presence of a wild-type relA gene does not have these effects. In eubacteria ppGpp (guanosine 3'-diphosphate 5'-diphosphate) is a mediator of the stringent response that coordinates a variety of cellular activities in response to changes in nutritional abundance. activities in response to changes in nutritional abundance. YwaC has probably a minor role in stringent response. This Bacillus subtilis (strain 168) protein is GTP pyrophosphokinase YwaC (ywaC).